A 205-amino-acid chain; its full sequence is uncharacterized protein (205 aa).

Catalysis depends on charge relay system residues Ser-119 and His-160.

The protein belongs to the peptidase S51 family.

This is an uncharacterized protein from Listeria monocytogenes serovar 1/2a (strain ATCC BAA-679 / EGD-e).